Here is an 809-residue protein sequence, read N- to C-terminus: Zinc finger CCCH domain-containing protein 24 (809 aa).

M1 is subject to N-acetylmethionine. The segment at 1-74 (METSSIEINE…NLESSDTKIT (74 aa)) is disordered. Over residues 30–46 (ETSSIDELPSSDSNATD) the composition is skewed to polar residues. Residues 51–65 (VGEKRKRADEDEKTN) show a composition bias toward basic and acidic residues. A C3H1-type zinc finger spans residues 79 to 107 (WWKTSLCSYFRREASCSHGNECKYAHGEA). S-adenosyl-L-methionine contacts are provided by Q536 and E586. The disordered stretch occupies residues 652–693 (EEMTNSEHVADQNLPPSNTQVEELQDNEQKDSSSLEPEKTTK). Residues 678-692 (NEQKDSSSLEPEKTT) are compositionally biased toward basic and acidic residues. D704 serves as a coordination point for S-adenosyl-L-methionine. C732 serves as the catalytic Nucleophile.

It belongs to the class I-like SAM-binding methyltransferase superfamily. RNA M5U methyltransferase family.

The chain is Zinc finger CCCH domain-containing protein 24 from Arabidopsis thaliana (Mouse-ear cress).